Consider the following 191-residue polypeptide: Elongation factor P (191 aa).

Position 34 is an N6-(3,6-diaminohexanoyl)-5-hydroxylysine (Lys34).

This sequence belongs to the elongation factor P family. May be beta-lysylated on the epsilon-amino group of Lys-34 by the combined action of EpmA and EpmB, and then hydroxylated on the C5 position of the same residue by EpmC (if this protein is present). Lysylation is critical for the stimulatory effect of EF-P on peptide-bond formation. The lysylation moiety may extend toward the peptidyltransferase center and stabilize the terminal 3-CCA end of the tRNA. Hydroxylation of the C5 position on Lys-34 may allow additional potential stabilizing hydrogen-bond interactions with the P-tRNA.

Its subcellular location is the cytoplasm. Its pathway is protein biosynthesis; polypeptide chain elongation. Involved in peptide bond synthesis. Alleviates ribosome stalling that occurs when 3 or more consecutive Pro residues or the sequence PPG is present in a protein, possibly by augmenting the peptidyl transferase activity of the ribosome. Modification of Lys-34 is required for alleviation. The polypeptide is Elongation factor P (Marinomonas sp. (strain MWYL1)).